The following is a 1481-amino-acid chain: ABC-type transporter braE (1481 aa).

The next 6 helical transmembrane spans lie at 27–47 (FTVK…FILA), 86–106 (LILI…SSAL), 130–150 (IFLS…ARTY), 159–179 (EIAF…MLLL), 269–289 (LYVP…SFFC), and 308–328 (PANI…VIAI). The region spanning 281–549 (LAAIGSFFCQ…LLETLPQMAA (269 aa)) is the ABC transmembrane type-1 1 domain. N-linked (GlcNAc...) asparagine glycosylation occurs at Asn-367. The next 3 membrane-spanning stretches (helical) occupy residues 389-409 (ELWG…NLLG), 410-430 (VAFI…SFFM), and 491-511 (LMLT…PITF). One can recognise an ABC transporter 1 domain in the interval 594-823 (VAIKDGSFGW…QSYIHSLGVK (230 aa)). ATP is bound at residue 627–634 (GPIASGKS). N-linked (GlcNAc...) asparagine glycosylation is found at Asn-671 and Asn-813. 6 helical membrane-spanning segments follow: residues 887-907 (IAIF…TIWL), 928-948 (AIYA…GVLL), 1001-1021 (SALL…AVIA), 1026-1046 (YLAI…KFYL), 1111-1131 (LHFV…SLAV), and 1144-1164 (LVTL…YTAL). Residues 887 to 1166 (IAIFTSGLLY…VVIYYTALET (280 aa)) form the ABC transmembrane type-1 2 domain. 2 N-linked (GlcNAc...) asparagine glycosylation sites follow: Asn-1207 and Asn-1232. Residues 1224–1477 (LTTNELSSND…PGTRFGELWS (254 aa)) enclose the ABC transporter 2 domain. 1260-1267 (GRTGSGKS) contacts ATP. 2 N-linked (GlcNAc...) asparagine glycosylation sites follow: Asn-1330 and Asn-1364.

This sequence belongs to the ABC transporter superfamily. ABCC family. Conjugate transporter (TC 3.A.1.208) subfamily.

It localises to the membrane. In terms of biological role, ABC-type transporter; part of the gene cluster that mediates the biosynthesis of the brasilane terpene glycosides brasilane D and E. The chain is ABC-type transporter braE from Annulohypoxylon truncatum (Hypoxylon truncatum).